The sequence spans 591 residues: V-type ATP synthase alpha chain (591 aa).

233-240 (GPFGAGKT) lines the ATP pocket.

It belongs to the ATPase alpha/beta chains family.

It catalyses the reaction ATP + H2O + 4 H(+)(in) = ADP + phosphate + 5 H(+)(out). Functionally, produces ATP from ADP in the presence of a proton gradient across the membrane. The V-type alpha chain is a catalytic subunit. The sequence is that of V-type ATP synthase alpha chain from Streptococcus pyogenes serotype M2 (strain MGAS10270).